We begin with the raw amino-acid sequence, 330 residues long: Phosphate acyltransferase (330 aa).

The protein belongs to the PlsX family. Homodimer. Probably interacts with PlsY.

The protein resides in the cytoplasm. The enzyme catalyses a fatty acyl-[ACP] + phosphate = an acyl phosphate + holo-[ACP]. The protein operates within lipid metabolism; phospholipid metabolism. In terms of biological role, catalyzes the reversible formation of acyl-phosphate (acyl-PO(4)) from acyl-[acyl-carrier-protein] (acyl-ACP). This enzyme utilizes acyl-ACP as fatty acyl donor, but not acyl-CoA. This is Phosphate acyltransferase from Carboxydothermus hydrogenoformans (strain ATCC BAA-161 / DSM 6008 / Z-2901).